The sequence spans 271 residues: Imidazole glycerol phosphate synthase subunit HisF (271 aa).

Catalysis depends on residues Asp12 and Asp136.

The protein belongs to the HisA/HisF family. Heterodimer of HisH and HisF.

The protein resides in the cytoplasm. The enzyme catalyses 5-[(5-phospho-1-deoxy-D-ribulos-1-ylimino)methylamino]-1-(5-phospho-beta-D-ribosyl)imidazole-4-carboxamide + L-glutamine = D-erythro-1-(imidazol-4-yl)glycerol 3-phosphate + 5-amino-1-(5-phospho-beta-D-ribosyl)imidazole-4-carboxamide + L-glutamate + H(+). It participates in amino-acid biosynthesis; L-histidine biosynthesis; L-histidine from 5-phospho-alpha-D-ribose 1-diphosphate: step 5/9. In terms of biological role, IGPS catalyzes the conversion of PRFAR and glutamine to IGP, AICAR and glutamate. The HisF subunit catalyzes the cyclization activity that produces IGP and AICAR from PRFAR using the ammonia provided by the HisH subunit. The sequence is that of Imidazole glycerol phosphate synthase subunit HisF from Haloarcula marismortui (strain ATCC 43049 / DSM 3752 / JCM 8966 / VKM B-1809) (Halobacterium marismortui).